Reading from the N-terminus, the 1049-residue chain is Self-sufficient cytochrome P450 monooxygenase CYP505E4 (1049 aa).

A heme-binding site is contributed by C405. Positions 462 to 492 are disordered; that stretch reads ATALSQHNMSAGATSSPGSSAHPAGNKNAQD. Low complexity predominate over residues 471–486; the sequence is SAGATSSPGSSAHPAG. Positions 499 to 640 constitute a Flavodoxin-like domain; sequence ISFFYGSNSG…DLEVWEETNL (142 aa). FMN is bound by residues 505-509 and 584-616; these read SNSGT and VFGCGHQDWTKTFYRIPILIDDLMHKAGATRLT. Positions 678-906 constitute an FAD-binding FR-type domain; sequence RDLIEGKVTA…RPAKEAFHLP (229 aa).

The protein in the N-terminal section; belongs to the cytochrome P450 family. Requires FAD as cofactor. It depends on FMN as a cofactor. Heme serves as cofactor.

It carries out the reaction 2 oxidized [cytochrome P450] + NADPH = 2 reduced [cytochrome P450] + NADP(+) + H(+). It catalyses the reaction an organic molecule + reduced [NADPH--hemoprotein reductase] + O2 = an alcohol + oxidized [NADPH--hemoprotein reductase] + H2O + H(+). The enzyme catalyses dodecanoate + reduced [NADPH--hemoprotein reductase] + O2 = 5-hydroxydodecanoate + oxidized [NADPH--hemoprotein reductase] + H2O + H(+). The catalysed reaction is tetradecanoate + reduced [NADPH--hemoprotein reductase] + O2 = 7-hydroxytetradecanoate + oxidized [NADPH--hemoprotein reductase] + H2O + H(+). It carries out the reaction dodecan-1-ol + reduced [NADPH--hemoprotein reductase] + O2 = 1,5-dodecanediol + oxidized [NADPH--hemoprotein reductase] + H2O + H(+). It catalyses the reaction dodecan-1-ol + reduced [NADPH--hemoprotein reductase] + O2 = 1,4-dodecanediol + oxidized [NADPH--hemoprotein reductase] + H2O + H(+). The enzyme catalyses dodecan-1-ol + reduced [NADPH--hemoprotein reductase] + O2 = 1,6-dodecanediol + oxidized [NADPH--hemoprotein reductase] + H2O + H(+). In terms of biological role, self-sufficient cytochrome P450 monooxygenase that catalyzes the regioselective in-chain hydroxylation of alkanes, fatty alcohols, and fatty acids at the omega-7 position. Performs hydroxylation of C10-C16 n-alkanes and C12 and C14 fatty alcohols; and thereby enables the one step biocatalytic synthesis of rare alcohols such as 5-dodecanol and 7-tetradecanol. Converts 1-dodecanol into 1,5-dodecanediol as major product with very little sub-terminally hydroxylated products with the 1,4-dodecanediol and 1,6-dodecanediol more abundant. Converts dodecanoic acid to 5-hydroxydodecanoic acid which can be further converted into delta-dodecalactone by lactonization of the 5-hydroxy acid at low pH. Also gives sub-terminal hydroxylation of dodecanoic acid with 9-hydroxydodecanoic acid being the second most abundant product. In Penicillium freii, this protein is Self-sufficient cytochrome P450 monooxygenase CYP505E4.